We begin with the raw amino-acid sequence, 130 residues long: DNA-directed RNA polymerase subunit omega (130 aa).

Positions 80-130 are disordered; it reads PEPDTVPLIGSAGASVDADDTEVAPERMTEEELLKGLEGLAPPEEQPEEDE. The segment covering 103-114 has biased composition (basic and acidic residues); sequence APERMTEEELLK.

Belongs to the RNA polymerase subunit omega family. As to quaternary structure, the RNAP catalytic core consists of 2 alpha, 1 beta, 1 beta' and 1 omega subunit. When a sigma factor is associated with the core the holoenzyme is formed, which can initiate transcription.

It catalyses the reaction RNA(n) + a ribonucleoside 5'-triphosphate = RNA(n+1) + diphosphate. Promotes RNA polymerase assembly. Latches the N- and C-terminal regions of the beta' subunit thereby facilitating its interaction with the beta and alpha subunits. The protein is DNA-directed RNA polymerase subunit omega of Rhodopseudomonas palustris (strain BisB18).